We begin with the raw amino-acid sequence, 585 residues long: Auxin response factor 17 (585 aa).

The TF-B3 DNA-binding region spans 119–221 (FAKILTPSDA…EMFIGVRRTP (103 aa)). Disordered stretches follow at residues 483-517 (EMMN…RGPL) and 535-585 (EHSE…SSQG). Low complexity predominate over residues 488–510 (GSPPSDNLSPNSNTTNLSSGNDL). Polar residues predominate over residues 573 to 585 (KHSNSNAGSSSQG).

Belongs to the ARF family. In terms of assembly, homo and heterodimers.

It is found in the nucleus. Auxin response factors (ARFs) are transcriptional factors that bind specifically to the DNA sequence 5'-TGTCTC-3' found in the auxin-responsive promoter elements (AuxREs). Could act as transcriptional activator or repressor. Formation of heterodimers with Aux/IAA proteins may alter their ability to modulate early auxin response genes expression. The chain is Auxin response factor 17 (ARF17) from Arabidopsis thaliana (Mouse-ear cress).